The primary structure comprises 459 residues: Cysteine--tRNA ligase (459 aa).

Cys28 is a Zn(2+) binding site. Positions 30-40 (VTIYDLCHIGH) match the 'HIGH' region motif. 3 residues coordinate Zn(2+): Cys209, His234, and Glu238. The 'KMSKS' region motif lies at 266 to 270 (KMSKS). Lys269 contacts ATP.

The protein belongs to the class-I aminoacyl-tRNA synthetase family. In terms of assembly, monomer. Zn(2+) serves as cofactor.

It localises to the cytoplasm. It carries out the reaction tRNA(Cys) + L-cysteine + ATP = L-cysteinyl-tRNA(Cys) + AMP + diphosphate. This is Cysteine--tRNA ligase from Shewanella baltica (strain OS223).